Consider the following 215-residue polypeptide: Putative lipoprotein NMB1124/NMB1162 (215 aa).

The first 16 residues, 1 to 16, serve as a signal peptide directing secretion; that stretch reads MKPLILGLAAVLALSA. C17 carries the N-palmitoyl cysteine lipid modification. C17 carries S-diacylglycerol cysteine lipidation.

It is found in the cell membrane. The sequence is that of Putative lipoprotein NMB1124/NMB1162 from Neisseria meningitidis serogroup B (strain ATCC BAA-335 / MC58).